A 162-amino-acid polypeptide reads, in one-letter code: 2-C-methyl-D-erythritol 2,4-cyclodiphosphate synthase (162 aa).

The a divalent metal cation site is built by aspartate 9 and histidine 11. 4-CDP-2-C-methyl-D-erythritol 2-phosphate contacts are provided by residues 9 to 11 and 37 to 38; these read DFH and HS. Histidine 45 provides a ligand contact to a divalent metal cation. 4-CDP-2-C-methyl-D-erythritol 2-phosphate-binding positions include 59-61, 64-68, 135-138, and arginine 145; these read DIG, FPDTD, and TTSE.

It belongs to the IspF family. In terms of assembly, homotrimer. The cofactor is a divalent metal cation.

The catalysed reaction is 4-CDP-2-C-methyl-D-erythritol 2-phosphate = 2-C-methyl-D-erythritol 2,4-cyclic diphosphate + CMP. Its pathway is isoprenoid biosynthesis; isopentenyl diphosphate biosynthesis via DXP pathway; isopentenyl diphosphate from 1-deoxy-D-xylulose 5-phosphate: step 4/6. Involved in the biosynthesis of isopentenyl diphosphate (IPP) and dimethylallyl diphosphate (DMAPP), two major building blocks of isoprenoid compounds. Catalyzes the conversion of 4-diphosphocytidyl-2-C-methyl-D-erythritol 2-phosphate (CDP-ME2P) to 2-C-methyl-D-erythritol 2,4-cyclodiphosphate (ME-CPP) with a corresponding release of cytidine 5-monophosphate (CMP). This chain is 2-C-methyl-D-erythritol 2,4-cyclodiphosphate synthase, found in Leptospira biflexa serovar Patoc (strain Patoc 1 / Ames).